The following is a 796-amino-acid chain: Protein translocase subunit SecA 2 (796 aa).

Residues glutamine 84, 102 to 106 (GEGKT), and aspartate 496 each bind ATP.

This sequence belongs to the SecA family. In terms of assembly, monomer and homodimer. Part of the essential Sec protein translocation apparatus which comprises SecA, SecYEG and auxiliary proteins SecDF. Other proteins may also be involved.

It is found in the cell membrane. The protein localises to the cytoplasm. The enzyme catalyses ATP + H2O + cellular proteinSide 1 = ADP + phosphate + cellular proteinSide 2.. In terms of biological role, part of the Sec protein translocase complex. Interacts with the SecYEG preprotein conducting channel. Has a central role in coupling the hydrolysis of ATP to the transfer of proteins into and across the cell membrane, serving as an ATP-driven molecular motor driving the stepwise translocation of polypeptide chains across the membrane. The sequence is that of Protein translocase subunit SecA 2 from Staphylococcus aureus (strain Mu3 / ATCC 700698).